A 910-amino-acid polypeptide reads, in one-letter code: MQDKYNHTEVERAAHAHWNANDAYRVTEDQAKPKFYACSMLPYPSGKLHMGHVRNYTINDMLTRSLRMKGHNVLMPMGWDAFGLPAENAALKNGVPPAQWTYDNIAYMKKQMQAMGLAIDWSREVATCDPDYYKWNQWLFLKMLDKGIAYRKTQVVNWDPVDQTVLANEQVIDGRGWRTGALVEKREIPGYYLKITDYAQELLDHVQIGNEKATLTGWPDKVRLMQENWIGKSAGVRFAFPHDIRNAAGERIQDGKLYVFTTRADTIMGVTFCAVAPEHPLAQHAAASNAPLAAFIEECKKGGTTEAELALKEKEGMPTGLFVTHPLTGEQVEVWVGNYVLMSYGDGAVMGVPAHDERDFAFALKYQLPIKQVVLVDGETFDFHQWQDWYGDKERGVTINSDNFSGLSYQDAVAAVAHALAEKGLGELKTTWRLRDWGISRQRYWGTPIPIIHCESCGAVPVPEKDLPVVLPQDLVPDGSGNPLAKCEAFLKVDCPCCGKPARRETDTMDTFVDSSWYFMRYCDPKNRDAMVAGGTDYWMRDQKAATGGSGMDQYIGGIEHAILHLLYARFWTKVMRDLGLVKVDEPFTKLLTQGMVLNHIYSRRTAKGAKDYFWPHDVEHVYDEAGKIVGAKLKNPAESGDGLLPVGTPIDYEGVGTMSKSKNNGVDPQQLIEKYGADTARLYTMFTAPPELTLEWNDAAVEGSYRFLRRVWNFGVKLSAIDKDAALASVAGAASLKDVQFGKEAKALRLEIHTVLKQVDYDYQRMQYNTVVSGAMKMINALEDFKATDSAGAQVALIEGFGILLRVLYPATPHIAHVLWDELGYAGTLGDLLDAAWPQVAPDALVQDELELMLQVNGKLRGAIRVAASADKAAIEQAALASEDFQKFAEGKAPKKVIIVPGRLVNVVV.

The short motif at 42-52 (PYPSGKLHMGH) is the 'HIGH' region element. A 'KMSKS' region motif is present at residues 658-662 (TMSKS). Lysine 661 serves as a coordination point for ATP.

It belongs to the class-I aminoacyl-tRNA synthetase family.

The protein localises to the cytoplasm. The catalysed reaction is tRNA(Leu) + L-leucine + ATP = L-leucyl-tRNA(Leu) + AMP + diphosphate. The chain is Leucine--tRNA ligase from Acidovorax ebreus (strain TPSY) (Diaphorobacter sp. (strain TPSY)).